Reading from the N-terminus, the 616-residue chain is Dihydroxy-acid dehydratase (616 aa).

Asp-81 contributes to the Mg(2+) binding site. Cys-122 contacts [2Fe-2S] cluster. Residues Asp-123 and Lys-124 each coordinate Mg(2+). The residue at position 124 (Lys-124) is an N6-carboxylysine. Residue Cys-195 coordinates [2Fe-2S] cluster. Glu-491 contributes to the Mg(2+) binding site. The active-site Proton acceptor is Ser-517.

It belongs to the IlvD/Edd family. In terms of assembly, homodimer. [2Fe-2S] cluster is required as a cofactor. The cofactor is Mg(2+).

The catalysed reaction is (2R)-2,3-dihydroxy-3-methylbutanoate = 3-methyl-2-oxobutanoate + H2O. It catalyses the reaction (2R,3R)-2,3-dihydroxy-3-methylpentanoate = (S)-3-methyl-2-oxopentanoate + H2O. It participates in amino-acid biosynthesis; L-isoleucine biosynthesis; L-isoleucine from 2-oxobutanoate: step 3/4. The protein operates within amino-acid biosynthesis; L-valine biosynthesis; L-valine from pyruvate: step 3/4. Functionally, functions in the biosynthesis of branched-chain amino acids. Catalyzes the dehydration of (2R,3R)-2,3-dihydroxy-3-methylpentanoate (2,3-dihydroxy-3-methylvalerate) into 2-oxo-3-methylpentanoate (2-oxo-3-methylvalerate) and of (2R)-2,3-dihydroxy-3-methylbutanoate (2,3-dihydroxyisovalerate) into 2-oxo-3-methylbutanoate (2-oxoisovalerate), the penultimate precursor to L-isoleucine and L-valine, respectively. This chain is Dihydroxy-acid dehydratase, found in Yersinia enterocolitica serotype O:8 / biotype 1B (strain NCTC 13174 / 8081).